Reading from the N-terminus, the 1370-residue chain is MAYSYTERKRIRKSFGSRDSVLEVPYLLQMQKDAYTAFLQSDVAPKKRTIEGLQAAFNSAFPIVSHNGFVEMKFVEYNLAKPAFDVRECQTRGLTFASAVRAKVQLIIYDRESSTSQSKVVKEVKEQEVYMGEVPLMTEKGSFIINGTERVIVSQLHRSPGVFFEHDKGKTHSSGKLLFSARIIPYRGSWLDFEFDPKDLLFFRVDRRRKMPVSILLKAIGLTPESILANFFVNDNFRLMDSGAQMEFVSERLRGEVARFDITDKSGKVVVAKDKRVTARHTRELEQSGTKFISVPEDFLIGRVVAKNIVDPDTGEIIAKANEELTESLLKKLRSAGIQDLQCIYTNELDQGAYISQTLRTDETVDEFAARVAIYRMMRPGEPPTEDAVQALFQRLFYNPDTYDLSRVGRMKFNAKVGRDGATGPMVLSNEDILAVVKILVDLRNGKGEVDDIDHLGNRRVRCVGELAENQYRTGLARIEKAVKERLGQAEQEPLMPHDLINSKPISAALKEFFGASQLSQFMDQTNPLAEITHKRRVSALGPGGLTRERAGFEVRDVHVTHYGRVCPIETPEGPNIGLINSLALYARLNEYGFIETPYRRVADGKVTMEIDYLSAIEEGKYIIAQANAELDAEGRLIGDLVSAREKGDSTLVSAERVQYMDVSPAQIVSVAASLIPFLEHDDANRALMGANMSRQAVPVLRPEKPMVGTGIERVAAVDSGTVVTATRGGIVDYVDATRIVVRVNDAEAVAGEVGVDIYNLIKYQRSNQNTNIHQRPIVKRGDKLAKGDVVADGASTDLGEIAIGQNMLIAFMPWNGYNFEDSILINERVVAEDRYTSIHIEELVVMARDTKLGAEEITRDIPNLSEQQLNRLDESGIIYVGAEVQPGDVLVGKVTPKGETTLTPEEKLLRAIFGEKASDVKDTSLRVDQGSQGTVIDVQVFTREGIQRDKRAQQIIDDELKRYRLDLNDQLRIVEADAFDRIEKLLNGRVANGGPQKLAKGAKIDKAYLDGVEKFHWFDIRPAEDEVATQLESIKNSLEQTRHSFDLAFEEKRKKLTQGDELPAGVLKMVKVYLAVKRRLQPGDKMAGRHGNKGVVSKIVPVEDMPYMADGSTADIVLNPLGVPSRMNIGQVLEVHLGWAGKGLGQRIGDMLQQEARAAEIRTFMEEIYNSRGRKEDLTQLDDKEIVSMAQALTTGVPFATPVFDGASEQEIQDMLHLAYPEELAQRKGLTESRTQAYLYDGRTGDRFERPTTIGYMHYLKLHHLVDDKMHARSTGPYSLVTQQPLGGKAQFGGQRFGEMEVWALEAYGAAYVLQEMLTVKSDDVVGRTKVYESIVKGEHAIEAGMPESFNVLVKEIRSLGLDIELERS.

It belongs to the RNA polymerase beta chain family. In terms of assembly, the RNAP catalytic core consists of 2 alpha, 1 beta, 1 beta' and 1 omega subunit. When a sigma factor is associated with the core the holoenzyme is formed, which can initiate transcription.

The catalysed reaction is RNA(n) + a ribonucleoside 5'-triphosphate = RNA(n+1) + diphosphate. Functionally, DNA-dependent RNA polymerase catalyzes the transcription of DNA into RNA using the four ribonucleoside triphosphates as substrates. The protein is DNA-directed RNA polymerase subunit beta of Delftia acidovorans (strain DSM 14801 / SPH-1).